A 184-amino-acid chain; its full sequence is Putative manganese efflux pump MntP (184 aa).

The next 5 membrane-spanning stretches (helical) occupy residues Ile-39 to Val-59, Ile-65 to Ala-85, Leu-102 to Phe-122, Leu-132 to Leu-152, and Leu-161 to Val-181.

This sequence belongs to the MntP (TC 9.B.29) family.

It localises to the cell inner membrane. Probably functions as a manganese efflux pump. The chain is Putative manganese efflux pump MntP from Campylobacter curvus (strain 525.92).